The sequence spans 33 residues: Gastrin (33 aa).

The segment at 1–21 (ELEPQGPPHLGTDLSKKQGPW) is disordered. Gln-18 bears the Pyrrolidone carboxylic acid mark. Residue Tyr-28 is modified to Sulfotyrosine. Phe-33 carries the phenylalanine amide modification.

The protein belongs to the gastrin/cholecystokinin family.

Its subcellular location is the secreted. Gastrin stimulates the stomach mucosa to produce and secrete hydrochloric acid and the pancreas to secrete its digestive enzymes. It also stimulates smooth muscle contraction and increases blood circulation and water secretion in the stomach and intestine. This is Gastrin (GAST) from Chinchilla chinchilla (Short-tailed chinchilla).